We begin with the raw amino-acid sequence, 120 residues long: U13-lycotoxin-Ls1a (120 aa).

Residues 1–16 form the signal peptide; it reads MKILFVLISILHAVYC. Positions 17–54 are excised as a propeptide; sequence FSSEEDVDSAYLANELEPVEDINSEQYAALEPKEEHER. 4 cysteine pairs are disulfide-bonded: cysteine 56–cysteine 70, cysteine 63–cysteine 76, cysteine 69–cysteine 87, and cysteine 78–cysteine 85. In terms of domain architecture, Agouti spans 56-95; sequence CADMGQDCKDDCDCCLNIATCNCWFGRYFCSCTFGDYQTC.

This sequence belongs to the neurotoxin 05 (agouti) family. In terms of processing, contains 6 disulfide bonds. Expressed by the venom gland.

The protein resides in the secreted. The chain is U13-lycotoxin-Ls1a from Lycosa singoriensis (Wolf spider).